The primary structure comprises 475 residues: 3-isopropylmalate dehydratase large subunit 1 (475 aa).

[4Fe-4S] cluster contacts are provided by Cys353, Cys413, and Cys416.

This sequence belongs to the aconitase/IPM isomerase family. LeuC type 1 subfamily. As to quaternary structure, heterodimer of LeuC and LeuD. Requires [4Fe-4S] cluster as cofactor.

The catalysed reaction is (2R,3S)-3-isopropylmalate = (2S)-2-isopropylmalate. It functions in the pathway amino-acid biosynthesis; L-leucine biosynthesis; L-leucine from 3-methyl-2-oxobutanoate: step 2/4. In terms of biological role, catalyzes the isomerization between 2-isopropylmalate and 3-isopropylmalate, via the formation of 2-isopropylmaleate. The sequence is that of 3-isopropylmalate dehydratase large subunit 1 from Mannheimia succiniciproducens (strain KCTC 0769BP / MBEL55E).